We begin with the raw amino-acid sequence, 241 residues long: Small ribosomal subunit protein uS2 (241 aa).

Belongs to the universal ribosomal protein uS2 family.

The sequence is that of Small ribosomal subunit protein uS2 from Pectobacterium atrosepticum (strain SCRI 1043 / ATCC BAA-672) (Erwinia carotovora subsp. atroseptica).